The primary structure comprises 318 residues: Ribose-phosphate pyrophosphokinase 2 (318 aa).

The Mg(2+) site is built by Asp-132, His-134, His-143, and Asp-147.

This sequence belongs to the ribose-phosphate pyrophosphokinase family.

The protein localises to the cytoplasm. The enzyme catalyses D-ribose 5-phosphate + ATP = 5-phospho-alpha-D-ribose 1-diphosphate + AMP + H(+). The protein operates within metabolic intermediate biosynthesis; 5-phospho-alpha-D-ribose 1-diphosphate biosynthesis; 5-phospho-alpha-D-ribose 1-diphosphate from D-ribose 5-phosphate (route I): step 1/1. Functionally, 5-phosphoribose 1-diphosphate synthase involved in nucleotide, histidine, and tryptophan biosynthesis. Active in heteromultimeric complexes with other 5-phosphoribose 1-diphosphate synthases (PRS2, PRS3, PRS4 and PRS5). The sequence is that of Ribose-phosphate pyrophosphokinase 2 (PRS2) from Saccharomyces cerevisiae (strain ATCC 204508 / S288c) (Baker's yeast).